The chain runs to 303 residues: Eukaryotic translation initiation factor 3 subunit F (303 aa).

A compositionally biased stretch (polar residues) spans 1–10 (MSLDTSSSAI). Positions 1 to 25 (MSLDTSSSAIHLQLPPTSSSLRPPS) are disordered. Over residues 12-25 (LQLPPTSSSLRPPS) the composition is skewed to low complexity. An MPN domain is found at 27-165 (ITVHPSVIAQ…VKGWVSQPLG (139 aa)).

It belongs to the eIF-3 subunit F family. As to quaternary structure, component of the eukaryotic translation initiation factor 3 (eIF-3) complex.

The protein resides in the cytoplasm. Functionally, component of the eukaryotic translation initiation factor 3 (eIF-3) complex, which is involved in protein synthesis of a specialized repertoire of mRNAs and, together with other initiation factors, stimulates binding of mRNA and methionyl-tRNAi to the 40S ribosome. The eIF-3 complex specifically targets and initiates translation of a subset of mRNAs involved in cell proliferation. The polypeptide is Eukaryotic translation initiation factor 3 subunit F (Cryptococcus neoformans var. neoformans serotype D (strain B-3501A) (Filobasidiella neoformans)).